The sequence spans 152 residues: Proline-rich acidic protein 1 (152 aa).

A signal peptide spans 1–20 (MKRFLLATCLVAVLLWEAGA).

In terms of assembly, interacts with MTTP. Interacts with MAD1L1. In terms of tissue distribution, highly expressed in the small intestine where it shows a proximal-distal graded expression.

Its subcellular location is the secreted. The protein localises to the endoplasmic reticulum. Functionally, lipid-binding protein which promotes lipid absorption by facilitating MTTP-mediated lipid transfer (mainly triglycerides and phospholipids) and MTTP-mediated apoB lipoprotein assembly and secretion. Protects the gastrointestinal epithelium from irradiation-induced apoptosis. May play an important role in maintaining normal growth homeostasis in epithelial cells. Involved in p53/TP53-dependent cell survival after DNA damage. The polypeptide is Proline-rich acidic protein 1 (Prap1) (Rattus norvegicus (Rat)).